Consider the following 844-residue polypeptide: Janus kinase and microtubule-interacting protein 3 (844 aa).

A coiled-coil region spans residues 8–258; it reads SRAKGDKAEA…QLSQVREADR (251 aa). The interval 250–290 is disordered; it reads LSQVREADRHPGSPRRELPHAAGAGDASDHSGSPEQQLDEK. Residues 254–268 are compositionally biased toward basic and acidic residues; that stretch reads READRHPGSPRRELP. The span at 269–282 shows a compositional bias: low complexity; the sequence is HAAGAGDASDHSGS. Residues 289–421 adopt a coiled-coil conformation; that stretch reads EKDARRFQLK…DELSKTLETA (133 aa). A Phosphoserine modification is found at Ser384. The segment covering 466–483 has biased composition (polar residues); the sequence is SDGSSVSYQTDRTDQTPC. The disordered stretch occupies residues 466 to 489; sequence SDGSSVSYQTDRTDQTPCTPDDDL. Coiled coils occupy residues 493–621 and 683–834; these read MAKE…RERK and VLTL…FLFL.

The protein belongs to the JAKMIP family. As to expression, specifically expressed in the CNS and endocrine tissues. Also detected in other tissues including heart, testis and prostate.

Its subcellular location is the golgi apparatus. This is Janus kinase and microtubule-interacting protein 3 (JAKMIP3) from Homo sapiens (Human).